A 317-amino-acid chain; its full sequence is L-lactate dehydrogenase (317 aa).

NAD(+) is bound by residues V17, D38, K43, Y68, and 82-83; that span reads GV. A substrate-binding site is contributed by R91. Residues S104, 121 to 123, and S146 contribute to the NAD(+) site; that span reads VSN. Residue 123–126 coordinates substrate; that stretch reads NPVD. Residue 151–154 participates in substrate binding; that stretch reads DTSR. 2 residues coordinate beta-D-fructose 1,6-bisphosphate: K156 and H171. The Proton acceptor role is filled by H178. Position 224 is a phosphotyrosine (Y224). Position 233 (T233) interacts with substrate.

Belongs to the LDH/MDH superfamily. LDH family. In terms of assembly, homotetramer.

The protein resides in the cytoplasm. The catalysed reaction is (S)-lactate + NAD(+) = pyruvate + NADH + H(+). It participates in fermentation; pyruvate fermentation to lactate; (S)-lactate from pyruvate: step 1/1. With respect to regulation, allosterically activated by fructose 1,6-bisphosphate (FBP). Its function is as follows. Catalyzes the conversion of lactate to pyruvate. The polypeptide is L-lactate dehydrogenase (Clostridium perfringens (strain SM101 / Type A)).